We begin with the raw amino-acid sequence, 67 residues long: DNA gyrase inhibitor YacG (67 aa).

Zn(2+)-binding residues include Cys10, Cys13, Cys29, and Cys33. Residues 44–57 (EEKRIPSSGDRSDT) are compositionally biased toward basic and acidic residues. The segment at 44–67 (EEKRIPSSGDRSDTDGWSEEENQP) is disordered.

It belongs to the DNA gyrase inhibitor YacG family. Interacts with GyrB. Requires Zn(2+) as cofactor.

In terms of biological role, inhibits all the catalytic activities of DNA gyrase by preventing its interaction with DNA. Acts by binding directly to the C-terminal domain of GyrB, which probably disrupts DNA binding by the gyrase. The chain is DNA gyrase inhibitor YacG from Cronobacter sakazakii (strain ATCC BAA-894) (Enterobacter sakazakii).